The primary structure comprises 265 residues: Mlc titration factor A (265 aa).

Residues histidine 111, histidine 148, histidine 152, and glutamate 211 each coordinate Zn(2+).

It belongs to the MtfA family. Interacts with Mlc. Zn(2+) is required as a cofactor.

It localises to the cytoplasm. Involved in the modulation of the activity of the glucose-phosphotransferase system (glucose-PTS). Interacts with the transcriptional repressor Mlc, preventing its interaction with DNA and leading to the modulation of expression of genes regulated by Mlc, including ptsG, which encodes the PTS system glucose-specific EIICB component. In terms of biological role, shows zinc-dependent metallopeptidase activity. The polypeptide is Mlc titration factor A (Salmonella enteritidis PT4 (strain P125109)).